The sequence spans 364 residues: Chorismate synthase (364 aa).

Residue Arg-48 coordinates NADP(+). FMN contacts are provided by residues 131 to 133, 243 to 244, Gly-288, 303 to 307, and Arg-329; these read RSS, NA, and KPTSS.

Belongs to the chorismate synthase family. Homotetramer. Requires FMNH2 as cofactor.

It catalyses the reaction 5-O-(1-carboxyvinyl)-3-phosphoshikimate = chorismate + phosphate. It functions in the pathway metabolic intermediate biosynthesis; chorismate biosynthesis; chorismate from D-erythrose 4-phosphate and phosphoenolpyruvate: step 7/7. Its function is as follows. Catalyzes the anti-1,4-elimination of the C-3 phosphate and the C-6 proR hydrogen from 5-enolpyruvylshikimate-3-phosphate (EPSP) to yield chorismate, which is the branch point compound that serves as the starting substrate for the three terminal pathways of aromatic amino acid biosynthesis. This reaction introduces a second double bond into the aromatic ring system. The chain is Chorismate synthase from Brucella abortus (strain S19).